A 333-amino-acid polypeptide reads, in one-letter code: tRNA uridine(34) hydroxylase (333 aa).

Residues 123–217 enclose the Rhodanese domain; that stretch reads SDPEVVLVDT…YLEEVNKAES (95 aa). Cys177 acts as the Cysteine persulfide intermediate in catalysis. The segment covering 313 to 327 has biased composition (basic and acidic residues); that stretch reads QKKEALRKQSAEKNK. The tract at residues 313–333 is disordered; the sequence is QKKEALRKQSAEKNKAKQANA.

This sequence belongs to the TrhO family.

The catalysed reaction is uridine(34) in tRNA + AH2 + O2 = 5-hydroxyuridine(34) in tRNA + A + H2O. Its function is as follows. Catalyzes oxygen-dependent 5-hydroxyuridine (ho5U) modification at position 34 in tRNAs. The sequence is that of tRNA uridine(34) hydroxylase from Shewanella oneidensis (strain ATCC 700550 / JCM 31522 / CIP 106686 / LMG 19005 / NCIMB 14063 / MR-1).